The chain runs to 419 residues: Phosphoglycerate kinase (419 aa).

Residues 21–23 (DFN), R36, 60–63 (HLGD), R137, and R174 each bind substrate. ATP-binding positions include K225, G316, E347, and 376–379 (GGDS).

The protein belongs to the phosphoglycerate kinase family. In terms of assembly, monomer.

The protein resides in the cytoplasm. It carries out the reaction (2R)-3-phosphoglycerate + ATP = (2R)-3-phospho-glyceroyl phosphate + ADP. It functions in the pathway carbohydrate degradation; glycolysis; pyruvate from D-glyceraldehyde 3-phosphate: step 2/5. This Treponema pallidum (strain Nichols) protein is Phosphoglycerate kinase (pgk).